The following is a 480-amino-acid chain: tRNA-2-methylthio-N(6)-dimethylallyladenosine synthase (480 aa).

Residues 29–145 (GSFWIQTFGC…LEALLTQVDN (117 aa)) enclose the MTTase N-terminal domain. [4Fe-4S] cluster is bound by residues Cys38, Cys74, Cys108, Cys180, Cys184, and Cys187. The region spanning 166–403 (RDSTICAWVN…NALVERIALQ (238 aa)) is the Radical SAM core domain. A TRAM domain is found at 406 to 474 (SRYSGKVEQV…AFSLSGTPCE (69 aa)).

It belongs to the methylthiotransferase family. MiaB subfamily. Monomer. The cofactor is [4Fe-4S] cluster.

It is found in the cytoplasm. It carries out the reaction N(6)-dimethylallyladenosine(37) in tRNA + (sulfur carrier)-SH + AH2 + 2 S-adenosyl-L-methionine = 2-methylsulfanyl-N(6)-dimethylallyladenosine(37) in tRNA + (sulfur carrier)-H + 5'-deoxyadenosine + L-methionine + A + S-adenosyl-L-homocysteine + 2 H(+). Catalyzes the methylthiolation of N6-(dimethylallyl)adenosine (i(6)A), leading to the formation of 2-methylthio-N6-(dimethylallyl)adenosine (ms(2)i(6)A) at position 37 in tRNAs that read codons beginning with uridine. The chain is tRNA-2-methylthio-N(6)-dimethylallyladenosine synthase from Prochlorococcus marinus (strain MIT 9313).